Consider the following 266-residue polypeptide: MYFLLSPAKSLNETDTAPMDISSYYSQPELIEHSQALMKILKSKEPIDLQELMSISDDLSQLNAKRNQDWAWSDNELFTDDNAKPAGYLFDGDVYTGLDMYNMDKDTAIYVNEHLGILSGLYGVLKPLDFIQPYRLEMGTKLKNERGDNLYEFWGEEVTKIINKRMADSDDKVLINLASNEYFKAVKKKALNAEIITPRFEDEKNGQYKVISFYAKKARGLMVKYAADNKLTNAEQLKQFDLAGYYYCETASDDKTWTFRRDEVNQ.

Belongs to the UPF0246 family.

This chain is UPF0246 protein Pcryo_0542, found in Psychrobacter cryohalolentis (strain ATCC BAA-1226 / DSM 17306 / VKM B-2378 / K5).